The chain runs to 655 residues: p-hydroxybenzoic acid efflux pump subunit AaeB (655 aa).

Over 1–12 (MDIFSIANQHIR) the chain is Periplasmic. Residues 13-33 (FAVKLATAIVLALFVGFHFQL) form a helical membrane-spanning segment. Topologically, residues 34 to 37 (ETPR) are cytoplasmic. Residues 38-58 (WAVLTAAIVAAGPAFAAGGEP) form a helical membrane-spanning segment. Residues 59–68 (YSGAIRYRGF) lie on the Periplasmic side of the membrane. Residues 69 to 89 (LRIIGTFIGCIAGLVIIIAMI) form a helical membrane-spanning segment. The Cytoplasmic portion of the chain corresponds to 90-92 (RAP). Residues 93-113 (LLMILVCCIWAGFCTWISSLV) traverse the membrane as a helical segment. At 114–120 (RIENSYA) the chain is on the periplasmic side. A helical transmembrane segment spans residues 121-141 (WGLAGYTALIIVITIQPEPLL). Residues 142-151 (TPQFAVERCS) are Cytoplasmic-facing. A helical membrane pass occupies residues 152-172 (EIVIGIVCAIMADLLFSPRSI). The Periplasmic portion of the chain corresponds to 173-369 (KQEVDRELES…RTTLSCILGT (197 aa)). Residues 370 to 390 (LFWLWTGWTSGSGAMVMIAVV) traverse the membrane as a helical segment. At 391 to 406 (TSLAMRLPNPRMVAID) the chain is on the cytoplasmic side. A helical transmembrane segment spans residues 407 to 427 (FIYGTLAALPLGLLYFLVIIP). Residues 428 to 430 (NTQ) are Periplasmic-facing. A helical membrane pass occupies residues 431-451 (QSMLLLCISLAVLGFFLGIEV). Topologically, residues 452–458 (QKRRLGS) are cytoplasmic. The chain crosses the membrane as a helical span at residues 459 to 479 (MGALASTINIIVLDNPMTFHF). The Periplasmic segment spans residues 480 to 481 (SQ). Residues 482–502 (FLDSALGQIVGCVLAFTVILL) traverse the membrane as a helical segment. Residues 503–655 (VRDKSRDRTG…HKYQHALTDS (153 aa)) lie on the Cytoplasmic side of the membrane.

It belongs to the aromatic acid exporter ArAE (TC 2.A.85) family.

It localises to the cell inner membrane. Its function is as follows. Forms an efflux pump with AaeA. Could function as a metabolic relief valve, allowing to eliminate certain compounds when they accumulate to high levels in the cell. The sequence is that of p-hydroxybenzoic acid efflux pump subunit AaeB from Escherichia coli O157:H7.